A 534-amino-acid polypeptide reads, in one-letter code: Probable bifunctional tRNA threonylcarbamoyladenosine biosynthesis protein (534 aa).

The interval Met1 to Trp325 is kae1. Residues His108, His112, and Tyr129 each coordinate Fe cation. L-threonylcarbamoyladenylate is bound by residues Tyr129–Gly133, Asp161, Gly174, Glu178, and Asn258. Residue Asp286 participates in Fe cation binding. Positions Leu335 to Asp534 constitute a Protein kinase domain. Residues Leu340–Ile348 and Lys361 contribute to the ATP site. Catalysis depends on Asp451, which acts as the Proton acceptor; for kinase activity.

In the N-terminal section; belongs to the KAE1 / TsaD family. This sequence in the C-terminal section; belongs to the protein kinase superfamily. Tyr protein kinase family. BUD32 subfamily. Component of the KEOPS complex that consists of Kae1, Bud32, Cgi121 and Pcc1; the whole complex dimerizes. Requires Fe(2+) as cofactor.

Its subcellular location is the cytoplasm. It catalyses the reaction L-seryl-[protein] + ATP = O-phospho-L-seryl-[protein] + ADP + H(+). The enzyme catalyses L-threonyl-[protein] + ATP = O-phospho-L-threonyl-[protein] + ADP + H(+). It carries out the reaction L-threonylcarbamoyladenylate + adenosine(37) in tRNA = N(6)-L-threonylcarbamoyladenosine(37) in tRNA + AMP + H(+). Functionally, required for the formation of a threonylcarbamoyl group on adenosine at position 37 (t(6)A37) in tRNAs that read codons beginning with adenine. Is a component of the KEOPS complex that is probably involved in the transfer of the threonylcarbamoyl moiety of threonylcarbamoyl-AMP (TC-AMP) to the N6 group of A37. The Kae1 domain likely plays a direct catalytic role in this reaction. The Bud32 domain probably displays kinase activity that regulates Kae1 function. In Methanothermobacter thermautotrophicus (strain ATCC 29096 / DSM 1053 / JCM 10044 / NBRC 100330 / Delta H) (Methanobacterium thermoautotrophicum), this protein is Probable bifunctional tRNA threonylcarbamoyladenosine biosynthesis protein.